A 226-amino-acid polypeptide reads, in one-letter code: MTTQVPPHSVQVHTTTTHRYEAGVVPPGARFETSYEAGVKAASIYHSERGPTTSQVLAVLAGLPVGGILLLLAGLTLAGTLTGLAVATPLFVLFSPVLVPATVAIGLAVAGFLTSGAFGLTALSSFSWILNYIRETQPASENLAAAAKHHLAEAAEYVGQKTKEVGQKTKEVGQDIQSKAQDTREAAARDAREAAARDAREAAARDAKVEARDVKRTTVTATTATA.

A polar region spans residues 1 to 76; it reads MTTQVPPHSV…GILLLLAGLT (76 aa). Transmembrane regions (helical) follow at residues 56–76, 90–110, and 111–131; these read VLAV…AGLT, LFVL…LAVA, and GFLT…WILN. Positions 77 to 130 are hydrophobic; the sequence is LAGTLTGLAVATPLFVLFSPVLVPATVAIGLAVAGFLTSGAFGLTALSSFSWIL. 5 repeat units span residues 159 to 165, 166 to 173, 184 to 191, 192 to 199, and 200 to 207. The segment at 159–173 is 2 X 7 AA tandem repeats; that stretch reads GQKTKEVGQKTKEVG. Basic and acidic residues-rich tracts occupy residues 164–173 and 181–216; these read EVGQKTKEVG and QDTR…DVKR. Residues 164–226 form a disordered region; it reads EVGQKTKEVG…TTVTATTATA (63 aa). The 3 X 8 AA tandem repeats stretch occupies residues 184–207; sequence REAAARDAREAAARDAREAAARDA. Positions 217 to 226 are enriched in low complexity; it reads TTVTATTATA.

Belongs to the oleosin family.

The protein localises to the lipid droplet. It is found in the membrane. May have a structural role to stabilize the lipid body during desiccation of the seed by preventing coalescence of the oil. Probably interacts with both lipid and phospholipid moieties of lipid bodies. May also provide recognition signals for specific lipase anchorage in lipolysis during seedling growth. The sequence is that of P24 oleosin isoform A from Glycine max (Soybean).